The primary structure comprises 1071 residues: ATP-dependent helicase/deoxyribonuclease subunit B (1071 aa).

It belongs to the helicase family. AddB/RexB type 2 subfamily. In terms of assembly, heterodimer of AddA and RexB. It depends on Mg(2+) as a cofactor.

Functionally, the heterodimer acts as both an ATP-dependent DNA helicase and an ATP-dependent, dual-direction single-stranded exonuclease. Recognizes the chi site generating a DNA molecule suitable for the initiation of homologous recombination. This subunit has 5' -&gt; 3' nuclease activity but not helicase activity. In Streptococcus pyogenes serotype M18 (strain MGAS8232), this protein is ATP-dependent helicase/deoxyribonuclease subunit B.